The chain runs to 101 residues: Small ribosomal subunit protein bS18c (101 aa).

It belongs to the bacterial ribosomal protein bS18 family. In terms of assembly, part of the 30S ribosomal subunit.

It localises to the plastid. The protein resides in the chloroplast. This chain is Small ribosomal subunit protein bS18c, found in Citrus sinensis (Sweet orange).